The chain runs to 325 residues: Putative carboxypeptidase YocD (325 aa).

The active-site Nucleophile is the serine 111. Residues glutamate 228 and histidine 296 each act as charge relay system in the active site.

It belongs to the peptidase S66 family.

In Bacillus subtilis (strain 168), this protein is Putative carboxypeptidase YocD (yocD).